Consider the following 289-residue polypeptide: Bidirectional sugar transporter SWEET11 (289 aa).

The Extracellular segment spans residues 1–9; it reads MSLFNTENT. The helical transmembrane segment at 10-30 threads the bilayer; sequence WAFVFGLLGNLISFAVFLSPV. The MtN3/slv 1 domain occupies 12–98; sequence FVFGLLGNLI…SMFLAYAPKP (87 aa). The Cytoplasmic portion of the chain corresponds to 31–43; that stretch reads PTFYRIWKKKTTE. Residues 44 to 64 traverse the membrane as a helical segment; the sequence is GFQSIPYVVALFSATLWLYYA. Residues 65 to 70 are Extracellular-facing; sequence TQKKDV. The chain crosses the membrane as a helical span at residues 71–91; it reads FLLVTINAFGCFIETIYISMF. At 92-105 the chain is on the cytoplasmic side; it reads LAYAPKPARMLTVK. The helical transmembrane segment at 106–126 threads the bilayer; sequence MLLLMNFGGFCAILLLCQFLV. The Extracellular segment spans residues 127–133; it reads KGATRAK. Residues 134–154 traverse the membrane as a helical segment; that stretch reads IIGGICVGFSVCVFAAPLSII. Residues 134 to 218 enclose the MtN3/slv 2 domain; sequence IIGGICVGFS…ILYVVYKYCK (85 aa). Residues 155–167 lie on the Cytoplasmic side of the membrane; the sequence is RTVIKTRSVEYMP. A helical membrane pass occupies residues 168-188; sequence FSLSLTLTISAVIWLLYGLAL. At 189 to 192 the chain is on the extracellular side; it reads KDIY. Residues 193–213 traverse the membrane as a helical segment; the sequence is VAFPNVLGFALGALQMILYVV. At 214–289 the chain is on the cytoplasmic side; that stretch reads YKYCKTSPHL…GKQSSSAAAT (76 aa). Positions 266–289 are disordered; it reads DRRAEIEDGQTPKHGKQSSSAAAT. The residue at position 276 (T276) is a Phosphothreonine.

The protein belongs to the SWEET sugar transporter family. In terms of assembly, forms homooligomers and heterooligomers with SWEET1, SWEET3, SWEET5, SWEET6, SWEET7, SWEET8, SWEET9, SWEET12, SWEET13, SWEET15 and SWEET17. In terms of tissue distribution, expressed in leaves, especially in phloem. Expressed in developing seeds.

It localises to the cell membrane. Functionally, mediates both low-affinity uptake and efflux of sugar across the plasma membrane. Involved in phloem loading by mediating export from parenchyma cells feeding H(+)-coupled import into the sieve element/companion cell complex, thus contributing to the sucrose migration from sites of synthesis in the mesophyll to the phloem. Contributes to seed filling by triggering sucrose efflux involved in the transfer of sugars from seed coat to embryos. The polypeptide is Bidirectional sugar transporter SWEET11 (Arabidopsis thaliana (Mouse-ear cress)).